Consider the following 684-residue polypeptide: Probable potassium transport system protein Kup (684 aa).

Transmembrane regions (helical) follow at residues 19–39 (ALLVTLGVVYGDIGTSPLYVM), 61–81 (VSLIFWTLLIITTVKYVLIAL), 104–124 (WLVLPAMVGGAALLADGMLTP), 151–171 (QVIWVTVLIITFLFFIQRFGT), 177–197 (AFGPIMFVWFTFLGVAGFIAL), 223–243 (MGLFILGSIFLATTGAEALYS), 255–275 (LSWPYVNICLVLNYFGQAVWL), 303–323 (LGAIILATLAAIIASQALISG), 352–372 (LYIPVVNTILWLACLAIIGYF), 381–401 (AYGLAITITMLMTTLLLYQYL), 407–427 (PAVVAIGTLIFFSAIETVFFI), and 433–453 (FLHGGYVTAMIAFIILAVMYV).

It belongs to the HAK/KUP transporter (TC 2.A.72) family.

It localises to the cell membrane. It carries out the reaction K(+)(in) + H(+)(in) = K(+)(out) + H(+)(out). Functionally, transport of potassium into the cell. Likely operates as a K(+):H(+) symporter. The polypeptide is Probable potassium transport system protein Kup (Lacticaseibacillus paracasei (strain ATCC 334 / BCRC 17002 / CCUG 31169 / CIP 107868 / KCTC 3260 / NRRL B-441) (Lactobacillus paracasei)).